The chain runs to 238 residues: 1-(5-phosphoribosyl)-5-[(5-phosphoribosylamino)methylideneamino] imidazole-4-carboxamide isomerase (238 aa).

Asp8 serves as the catalytic Proton acceptor. Residue Asp129 is the Proton donor of the active site.

The protein belongs to the HisA/HisF family.

The protein localises to the cytoplasm. It carries out the reaction 1-(5-phospho-beta-D-ribosyl)-5-[(5-phospho-beta-D-ribosylamino)methylideneamino]imidazole-4-carboxamide = 5-[(5-phospho-1-deoxy-D-ribulos-1-ylimino)methylamino]-1-(5-phospho-beta-D-ribosyl)imidazole-4-carboxamide. The protein operates within amino-acid biosynthesis; L-histidine biosynthesis; L-histidine from 5-phospho-alpha-D-ribose 1-diphosphate: step 4/9. This is 1-(5-phosphoribosyl)-5-[(5-phosphoribosylamino)methylideneamino] imidazole-4-carboxamide isomerase from Anaeromyxobacter dehalogenans (strain 2CP-1 / ATCC BAA-258).